A 96-amino-acid polypeptide reads, in one-letter code: UPF0251 protein Spea_3639 (96 aa).

It belongs to the UPF0251 family.

This Shewanella pealeana (strain ATCC 700345 / ANG-SQ1) protein is UPF0251 protein Spea_3639.